The following is a 105-amino-acid chain: uncharacterized protein (105 aa).

This is an uncharacterized protein from Haemophilus influenzae (strain ATCC 51907 / DSM 11121 / KW20 / Rd).